The sequence spans 302 residues: L-aminoadipate-semialdehyde dehydrogenase-phosphopantetheinyl transferase (302 aa).

CoA contacts are provided by residues Arg-44, 83 to 88, and 105 to 108; these read RTGKGK and NVSH. The Mg(2+) site is built by Asp-126 and Glu-178. A CoA-binding site is contributed by 178–182; that stretch reads ESFIK.

The protein belongs to the P-Pant transferase superfamily. AcpS family. As to quaternary structure, monomer. Mg(2+) is required as a cofactor.

The protein localises to the cytoplasm. The protein resides in the cytosol. The enzyme catalyses apo-[ACP] + CoA = holo-[ACP] + adenosine 3',5'-bisphosphate + H(+). It catalyses the reaction apo-[ACP] + acetyl-CoA = acetyl-[ACP] + adenosine 3',5'-bisphosphate + H(+). Functionally, catalyzes the post-translational modification of target proteins by phosphopantetheine. Can transfer the 4'-phosphopantetheine moiety from coenzyme A, regardless of whether the CoA is presented in the free thiol form or as an acetyl thioester, to a serine residue of a broad range of acceptors. The polypeptide is L-aminoadipate-semialdehyde dehydrogenase-phosphopantetheinyl transferase (aasdhppt) (Xenopus laevis (African clawed frog)).